The sequence spans 377 residues: Chorismate synthase (377 aa).

Positions 48 and 54 each coordinate NADP(+). FMN contacts are provided by residues R125 to S127, N238 to A239, G278, K293 to S297, and R319.

This sequence belongs to the chorismate synthase family. In terms of assembly, homotetramer. It depends on FMNH2 as a cofactor.

It catalyses the reaction 5-O-(1-carboxyvinyl)-3-phosphoshikimate = chorismate + phosphate. Its pathway is metabolic intermediate biosynthesis; chorismate biosynthesis; chorismate from D-erythrose 4-phosphate and phosphoenolpyruvate: step 7/7. In terms of biological role, catalyzes the anti-1,4-elimination of the C-3 phosphate and the C-6 proR hydrogen from 5-enolpyruvylshikimate-3-phosphate (EPSP) to yield chorismate, which is the branch point compound that serves as the starting substrate for the three terminal pathways of aromatic amino acid biosynthesis. This reaction introduces a second double bond into the aromatic ring system. The polypeptide is Chorismate synthase (Aromatoleum aromaticum (strain DSM 19018 / LMG 30748 / EbN1) (Azoarcus sp. (strain EbN1))).